Here is a 148-residue protein sequence, read N- to C-terminus: UPF0208 membrane protein HD_1715 (148 aa).

The next 2 membrane-spanning stretches (helical) occupy residues A41–T60 and I66–L88.

Belongs to the UPF0208 family.

It localises to the cell inner membrane. The polypeptide is UPF0208 membrane protein HD_1715 (Haemophilus ducreyi (strain 35000HP / ATCC 700724)).